A 127-amino-acid chain; its full sequence is Glycine cleavage system H protein (127 aa).

The 83-residue stretch at 22 to 104 (KVRIGITHFA…YEKAWMIVVE (83 aa)) folds into the Lipoyl-binding domain. Lys-63 carries the N6-lipoyllysine modification.

It belongs to the GcvH family. The glycine cleavage system is composed of four proteins: P, T, L and H. (R)-lipoate serves as cofactor.

The glycine cleavage system catalyzes the degradation of glycine. The H protein shuttles the methylamine group of glycine from the P protein to the T protein. Functionally, is also involved in protein lipoylation via its role as an octanoyl/lipoyl carrier protein intermediate. In Bacillus pumilus (strain SAFR-032), this protein is Glycine cleavage system H protein.